The following is a 390-amino-acid chain: Transforming growth factor beta-1 proprotein (390 aa).

The first 29 residues, 1–29 (MPPSGLRLLPLLLPLLWLLVLTPGRPAAG), serve as a signal peptide directing secretion. The segment at 30–74 (LSTCKTIDMELVKRKRIEAIRGQILSKLRLASPPSQGEVPPGPLP) is straightjacket domain. The arm domain stretch occupies residues 75 to 271 (EAVLALYNST…ATPLERAQHL (197 aa)). N-linked (GlcNAc...) asparagine glycans are attached at residues N82, N136, and N176. Residues 226–252 (DSRDNTLQVDINGFTTGRRGDLATIHG) form a bowtie tail region. The Cell attachment site signature appears at 244–246 (RGD). Intrachain disulfides connect C285–C294, C293–C356, C322–C387, and C326–C389.

Belongs to the TGF-beta family. As to quaternary structure, homodimer; disulfide-linked. Interacts with the serine proteases, HTRA1 and HTRA3: the interaction with either inhibits TGFB1-mediated signaling and the HTRA protease activity is required for this inhibition. May interact with THSD4; this interaction may lead to sequestration by FBN1 microfibril assembly and attenuation of TGFB signaling. Interacts with CD109, DPT and ASPN. Interacts with EFEMP2. Interacts with TSKU; the interaction contributes to regulation of the hair cycle. Homodimer; disulfide-linked. Interacts with transforming growth factor beta-1 (TGF-beta-1) chain; interaction is non-covalent and maintains TGF-beta-1 in a latent state; each latency-associated peptide (LAP) monomer interacts with TGF-beta-1 in the other monomer. Interacts with LTBP1; leading to regulation of TGF-beta-1 activation. Interacts with LRRC32/GARP; leading to regulation of TGF-beta-1 activation on the surface of activated regulatory T-cells (Tregs). Interacts with LRRC33/NRROS; leading to regulation of TGF-beta-1 in macrophages and microglia. Interacts (via cell attachment site) with integrins ITGAV and ITGB6 (ITGAV:ITGB6), leading to release of the active TGF-beta-1. Interacts with NREP; the interaction results in a decrease in TGFB1 autoinduction. Interacts with HSP90AB1; inhibits latent TGFB1 activation. Interact with PSG9; leading to TGFB1 activation. Interacts with TGFBR3. In terms of assembly, homodimer; disulfide-linked. Interacts with TGF-beta receptors (TGFBR1 and TGFBR2), leading to signal transduction. Transforming growth factor beta-1 proprotein: The precursor proprotein is cleaved in the Golgi apparatus by FURIN to form Transforming growth factor beta-1 (TGF-beta-1) and Latency-associated peptide (LAP) chains, which remain non-covalently linked, rendering TGF-beta-1 inactive. Post-translationally, N-glycosylated. Deglycosylation leads to activation of Transforming growth factor beta-1 (TGF-beta-1); mechanisms triggering deglycosylation-driven activation of TGF-beta-1 are however unclear. In terms of tissue distribution, highly expressed in bone. Abundantly expressed in articular cartilage and chondrocytes and is increased in osteoarthritis (OA). Colocalizes with ASPN in chondrocytes within OA lesions of articular cartilage.

The protein resides in the secreted. The protein localises to the extracellular space. It localises to the extracellular matrix. Transforming growth factor beta-1 proprotein: Precursor of the Latency-associated peptide (LAP) and Transforming growth factor beta-1 (TGF-beta-1) chains, which constitute the regulatory and active subunit of TGF-beta-1, respectively. In terms of biological role, required to maintain the Transforming growth factor beta-1 (TGF-beta-1) chain in a latent state during storage in extracellular matrix. Associates non-covalently with TGF-beta-1 and regulates its activation via interaction with 'milieu molecules', such as LTBP1, LRRC32/GARP and LRRC33/NRROS, that control activation of TGF-beta-1. Interaction with LRRC33/NRROS regulates activation of TGF-beta-1 in macrophages and microglia. Interaction with LRRC32/GARP controls activation of TGF-beta-1 on the surface of activated regulatory T-cells (Tregs). Interaction with integrins (ITGAV:ITGB6 or ITGAV:ITGB8) results in distortion of the Latency-associated peptide chain and subsequent release of the active TGF-beta-1. Functionally, multifunctional protein that regulates the growth and differentiation of various cell types and is involved in various processes, such as normal development, immune function, microglia function and responses to neurodegeneration. Activation into mature form follows different steps: following cleavage of the proprotein in the Golgi apparatus, Latency-associated peptide (LAP) and Transforming growth factor beta-1 (TGF-beta-1) chains remain non-covalently linked rendering TGF-beta-1 inactive during storage in extracellular matrix. At the same time, LAP chain interacts with 'milieu molecules', such as LTBP1, LRRC32/GARP and LRRC33/NRROS that control activation of TGF-beta-1 and maintain it in a latent state during storage in extracellular milieus. TGF-beta-1 is released from LAP by integrins (ITGAV:ITGB6 or ITGAV:ITGB8): integrin-binding to LAP stabilizes an alternative conformation of the LAP bowtie tail and results in distortion of the LAP chain and subsequent release of the active TGF-beta-1. Once activated following release of LAP, TGF-beta-1 acts by binding to TGF-beta receptors (TGFBR1 and TGFBR2), which transduce signal. While expressed by many cells types, TGF-beta-1 only has a very localized range of action within cell environment thanks to fine regulation of its activation by Latency-associated peptide chain (LAP) and 'milieu molecules'. Plays an important role in bone remodeling: acts as a potent stimulator of osteoblastic bone formation, causing chemotaxis, proliferation and differentiation in committed osteoblasts. Can promote either T-helper 17 cells (Th17) or regulatory T-cells (Treg) lineage differentiation in a concentration-dependent manner. At high concentrations, leads to FOXP3-mediated suppression of RORC and down-regulation of IL-17 expression, favoring Treg cell development. At low concentrations in concert with IL-6 and IL-21, leads to expression of the IL-17 and IL-23 receptors, favoring differentiation to Th17 cells. Stimulates sustained production of collagen through the activation of CREB3L1 by regulated intramembrane proteolysis (RIP). Mediates SMAD2/3 activation by inducing its phosphorylation and subsequent translocation to the nucleus. Positively regulates odontoblastic differentiation in dental papilla cells, via promotion of IPO7-mediated translocation of phosphorylated SMAD2 to the nucleus and subsequent transcription of target genes. Can induce epithelial-to-mesenchymal transition (EMT) and cell migration in various cell types. The protein is Transforming growth factor beta-1 proprotein of Homo sapiens (Human).